The sequence spans 356 residues: DNA polymerase IV (356 aa).

Positions 7 to 188 constitute a UmuC domain; that stretch reads IIHIDMDAFY…IPVTKFYGVG (182 aa). Positions 11 and 106 each coordinate Mg(2+). The active site involves Glu-107.

This sequence belongs to the DNA polymerase type-Y family. In terms of assembly, monomer. Mg(2+) serves as cofactor.

Its subcellular location is the cytoplasm. The enzyme catalyses DNA(n) + a 2'-deoxyribonucleoside 5'-triphosphate = DNA(n+1) + diphosphate. In terms of biological role, poorly processive, error-prone DNA polymerase involved in untargeted mutagenesis. Copies undamaged DNA at stalled replication forks, which arise in vivo from mismatched or misaligned primer ends. These misaligned primers can be extended by PolIV. Exhibits no 3'-5' exonuclease (proofreading) activity. May be involved in translesional synthesis, in conjunction with the beta clamp from PolIII. The chain is DNA polymerase IV from Listeria monocytogenes serotype 4a (strain HCC23).